A 205-amino-acid polypeptide reads, in one-letter code: N-(5'-phosphoribosyl)anthranilate isomerase (205 aa).

The protein belongs to the TrpF family.

It carries out the reaction N-(5-phospho-beta-D-ribosyl)anthranilate = 1-(2-carboxyphenylamino)-1-deoxy-D-ribulose 5-phosphate. Its pathway is amino-acid biosynthesis; L-tryptophan biosynthesis; L-tryptophan from chorismate: step 3/5. The sequence is that of N-(5'-phosphoribosyl)anthranilate isomerase from Marinomonas sp. (strain MWYL1).